Reading from the N-terminus, the 311-residue chain is Ribose-phosphate pyrophosphokinase (311 aa).

Residues 37–39 and 96–97 each bind ATP; these read DGE and RQ. 2 residues coordinate Mg(2+): histidine 130 and aspartate 170. Lysine 193 is a catalytic residue. D-ribose 5-phosphate-binding positions include arginine 195, aspartate 219, and 223-227; that span reads DTAGT.

This sequence belongs to the ribose-phosphate pyrophosphokinase family. Class I subfamily. In terms of assembly, homohexamer. The cofactor is Mg(2+).

Its subcellular location is the cytoplasm. The catalysed reaction is D-ribose 5-phosphate + ATP = 5-phospho-alpha-D-ribose 1-diphosphate + AMP + H(+). The protein operates within metabolic intermediate biosynthesis; 5-phospho-alpha-D-ribose 1-diphosphate biosynthesis; 5-phospho-alpha-D-ribose 1-diphosphate from D-ribose 5-phosphate (route I): step 1/1. In terms of biological role, involved in the biosynthesis of the central metabolite phospho-alpha-D-ribosyl-1-pyrophosphate (PRPP) via the transfer of pyrophosphoryl group from ATP to 1-hydroxyl of ribose-5-phosphate (Rib-5-P). The polypeptide is Ribose-phosphate pyrophosphokinase (Aquifex aeolicus (strain VF5)).